The primary structure comprises 475 residues: Zinc finger protein 296 (475 aa).

Residues 1-78 (MSRRKAGSAP…SPGPMPAGAA (78 aa)) form a disordered region. Lysine 35 participates in a covalent cross-link: Glycyl lysine isopeptide (Lys-Gly) (interchain with G-Cter in SUMO2). 3 consecutive C2H2-type zinc fingers follow at residues 157-180 (LSCL…QWDH), 231-253 (PTCP…MRSH), and 259-281 (YACD…KKTH). The segment at 275-385 (NRHKKTHRQV…KSGGKSRGPG (111 aa)) is disordered. 2 stretches are compositionally biased toward low complexity: residues 295-313 (SQEQ…AAAP) and 326-338 (GAAA…EPGA). Residues 339 to 351 (PGSGAQAGPGGDT) show a composition bias toward gly residues. The span at 354-367 (AITTEQRTDPANSQ) shows a compositional bias: polar residues. C2H2-type zinc fingers lie at residues 386–408 (GSCE…RRSH), 414–436 (YTCE…RRMH), and 445–468 (FECP…RQKH).

Belongs to the krueppel C2H2-type zinc-finger protein family. As to quaternary structure, interacts with KLF4.

Its subcellular location is the nucleus. May be a transcriptional corepressor with KLF4. The chain is Zinc finger protein 296 (ZNF296) from Homo sapiens (Human).